The following is a 404-amino-acid chain: Formate-dependent phosphoribosylglycinamide formyltransferase (404 aa).

N(1)-(5-phospho-beta-D-ribosyl)glycinamide contacts are provided by residues 25 to 26 and Glu-85; that span reads EL. ATP contacts are provided by residues Arg-118, Lys-159, 164–169, 199–202, and Glu-207; these read SSGKGQ and EGFV. The ATP-grasp domain occupies 123–318; it reads RLAAEELGLP…EFELHARAIL (196 aa). Mg(2+) contacts are provided by Glu-277 and Glu-289. N(1)-(5-phospho-beta-D-ribosyl)glycinamide-binding positions include Asp-296, Lys-365, and 372–373; that span reads RR.

This sequence belongs to the PurK/PurT family. As to quaternary structure, homodimer.

The catalysed reaction is N(1)-(5-phospho-beta-D-ribosyl)glycinamide + formate + ATP = N(2)-formyl-N(1)-(5-phospho-beta-D-ribosyl)glycinamide + ADP + phosphate + H(+). It participates in purine metabolism; IMP biosynthesis via de novo pathway; N(2)-formyl-N(1)-(5-phospho-D-ribosyl)glycinamide from N(1)-(5-phospho-D-ribosyl)glycinamide (formate route): step 1/1. In terms of biological role, involved in the de novo purine biosynthesis. Catalyzes the transfer of formate to 5-phospho-ribosyl-glycinamide (GAR), producing 5-phospho-ribosyl-N-formylglycinamide (FGAR). Formate is provided by PurU via hydrolysis of 10-formyl-tetrahydrofolate. This Burkholderia cenocepacia (strain HI2424) protein is Formate-dependent phosphoribosylglycinamide formyltransferase.